The sequence spans 942 residues: Isoleucine--tRNA ligase (942 aa).

The 'HIGH' region signature appears at 58 to 68 (PYANGDIHIGH). Glutamate 566 is an L-isoleucyl-5'-AMP binding site. The 'KMSKS' region signature appears at 607 to 611 (KMSKS). Position 610 (lysine 610) interacts with ATP. Zn(2+) is bound by residues cysteine 905, cysteine 908, cysteine 925, and cysteine 928.

This sequence belongs to the class-I aminoacyl-tRNA synthetase family. IleS type 1 subfamily. Monomer. Requires Zn(2+) as cofactor.

It localises to the cytoplasm. The enzyme catalyses tRNA(Ile) + L-isoleucine + ATP = L-isoleucyl-tRNA(Ile) + AMP + diphosphate. Functionally, catalyzes the attachment of isoleucine to tRNA(Ile). As IleRS can inadvertently accommodate and process structurally similar amino acids such as valine, to avoid such errors it has two additional distinct tRNA(Ile)-dependent editing activities. One activity is designated as 'pretransfer' editing and involves the hydrolysis of activated Val-AMP. The other activity is designated 'posttransfer' editing and involves deacylation of mischarged Val-tRNA(Ile). The sequence is that of Isoleucine--tRNA ligase from Vibrio parahaemolyticus serotype O3:K6 (strain RIMD 2210633).